The sequence spans 139 residues: D-ribose pyranase (139 aa).

Histidine 20 (proton donor) is an active-site residue. Substrate contacts are provided by residues aspartate 28, histidine 106, and tyrosine 128–asparagine 130.

It belongs to the RbsD / FucU family. RbsD subfamily. In terms of assembly, homodecamer.

It localises to the cytoplasm. The enzyme catalyses beta-D-ribopyranose = beta-D-ribofuranose. It functions in the pathway carbohydrate metabolism; D-ribose degradation; D-ribose 5-phosphate from beta-D-ribopyranose: step 1/2. Functionally, catalyzes the interconversion of beta-pyran and beta-furan forms of D-ribose. The polypeptide is D-ribose pyranase (Salmonella agona (strain SL483)).